Consider the following 283-residue polypeptide: Nucleotide-binding protein Sama_3091 (283 aa).

8 to 15 (GRSGSGKS) provides a ligand contact to ATP. 56–59 (DIRN) provides a ligand contact to GTP.

Belongs to the RapZ-like family.

Its function is as follows. Displays ATPase and GTPase activities. The polypeptide is Nucleotide-binding protein Sama_3091 (Shewanella amazonensis (strain ATCC BAA-1098 / SB2B)).